Reading from the N-terminus, the 725-residue chain is Catalase-peroxidase (725 aa).

A disordered region spans residues 1-20; it reads MSSEAKCPFPHAANRSRSNQ. Positions 91–215 form a cross-link, tryptophyl-tyrosyl-methioninium (Trp-Tyr) (with M-241); the sequence is WHATGTYRTM…LSATHMGLIY (125 aa). His-92 (proton acceptor) is an active-site residue. The tryptophyl-tyrosyl-methioninium (Tyr-Met) (with W-91) cross-link spans 215–241; sequence YVNPEGPDGSGDYMAAAKDIRATFYRM. His-256 contacts heme b.

This sequence belongs to the peroxidase family. Peroxidase/catalase subfamily. Homodimer or homotetramer. Heme b serves as cofactor. Formation of the three residue Trp-Tyr-Met cross-link is important for the catalase, but not the peroxidase activity of the enzyme.

It catalyses the reaction H2O2 + AH2 = A + 2 H2O. The catalysed reaction is 2 H2O2 = O2 + 2 H2O. In terms of biological role, bifunctional enzyme with both catalase and broad-spectrum peroxidase activity. The polypeptide is Catalase-peroxidase (Janthinobacterium sp. (strain Marseille) (Minibacterium massiliensis)).